We begin with the raw amino-acid sequence, 1005 residues long: Mitogen-activated protein kinase kinase kinase 10 (1005 aa).

Positions V32 to K96 constitute an SH3 domain. The Protein kinase domain maps to L118–I380. ATP-binding positions include I124–V132 and K145. D242 serves as the catalytic Proton acceptor. 2 leucine-zipper regions span residues I404–L425 and L439–I460. Disordered stretches follow at residues S551–P611, Q647–R676, F712–S736, and R758–A940. 2 stretches are compositionally biased toward basic and acidic residues: residues Q576 to T588 and S648 to A658. Composition is skewed to basic and acidic residues over residues I761–G786 and Y799–K809. A compositionally biased stretch (polar residues) spans Q810 to E826. The span at E862–P879 shows a compositional bias: pro residues. Positions S915 to A940 are enriched in low complexity.

The protein belongs to the protein kinase superfamily. STE Ser/Thr protein kinase family. MAP kinase kinase kinase subfamily. As to quaternary structure, homodimer. Binds to the GTPase rac1 but not cdc42 or rhoA. Interacts (via kinase domain) with pak1 (via kinase domain). Interacts with the ubiquitin-conjugating enzyme ube2d4. Mg(2+) serves as cofactor. In terms of processing, autophosphorylation on serine and threonine residues within the activation loop plays a role in enzyme activation. Mono- and poly-ubiquitinated. As to expression, in adults, strongly expressed in the brain and spleen with lower levels in pancreas, heart, muscle and kidney (at protein level). In the developing embryo, expressed at stage 22 in the cement gland. Weakly expressed in the pronephros from stage 24 or 25, with expression increasing in strength by stage 30 and continuing at least until stage 37. Expression in the developing pronephros correlates with epithelialization of the proximal pronephric tubules.

The catalysed reaction is L-seryl-[protein] + ATP = O-phospho-L-seryl-[protein] + ADP + H(+). It catalyses the reaction L-threonyl-[protein] + ATP = O-phospho-L-threonyl-[protein] + ADP + H(+). Its activity is regulated as follows. Homodimerization via the leucine zipper domains is required for autophosphorylation and subsequent activation. Activates the JUN N-terminal pathway. Essential for pronephros and cement gland development. This is Mitogen-activated protein kinase kinase kinase 10 (map3k10) from Xenopus laevis (African clawed frog).